The following is a 392-amino-acid chain: Chalcone synthase 1 (392 aa).

Residue cysteine 167 is part of the active site.

Belongs to the thiolase-like superfamily. Chalcone/stilbene synthases family.

The enzyme catalyses (E)-4-coumaroyl-CoA + 3 malonyl-CoA + 3 H(+) = 2',4,4',6'-tetrahydroxychalcone + 3 CO2 + 4 CoA. The protein operates within secondary metabolite biosynthesis; flavonoid biosynthesis. Its function is as follows. The primary product of this enzyme is 4,2',4',6'-tetrahydroxychalcone (also termed naringenin-chalcone or chalcone) which can under specific conditions spontaneously isomerize into naringenin. The chain is Chalcone synthase 1 (CHS1) from Secale cereale (Rye).